A 105-amino-acid chain; its full sequence is Prokineticin-1 (105 aa).

The first 19 residues, 1–19, serve as a signal peptide directing secretion; sequence MRGAVQVFIMLLLATVSDC. Cystine bridges form between C26/C38, C32/C50, C37/C78, C60/C86, and C80/C96.

It belongs to the AVIT (prokineticin) family.

The protein resides in the secreted. Functionally, potently contracts gastrointestinal (GI) smooth muscle. Induces proliferation, migration and fenestration (the formation of membrane discontinuities) in capillary endothelial cells derived from endocrine glands. Has little or no effect on a variety of other endothelial and non-endothelial cell types. Induces proliferation and differentiation, but not migration, of enteric neural crest cells. Directly influences neuroblastoma progression by promoting the proliferation and migration of neuroblastoma cells. Positively regulates PTGS2 expression and prostaglandin synthesis. May play a role in placentation. May play a role in normal and pathological testis angiogenesis. The protein is Prokineticin-1 (Prok1) of Rattus norvegicus (Rat).